We begin with the raw amino-acid sequence, 22 residues long: GRCCDVPNACSGRWCRDHAQCC.

Cystine bridges form between C3-C15, C4-C21, and C10-C22. The residue at position 22 (C22) is a Cysteine amide.

Belongs to the conotoxin M superfamily. As to expression, expressed by the venom duct. Has not been isolated from the crude venom.

The protein localises to the secreted. Functionally, mu-conotoxins block voltage-gated sodium channels (Nav). This synthetic toxin moderately blocks rNav1.1/SCN1A, rNav1.2/SCN2A, rNav1.3/SCN3A, rNav1.4/SCN4A, rNav1.5/SCN5A, and mNav1.6/SCN8A. This block is very slowly reversible. Causes seizures when injected intracranially into mice. The chain is Mu-conotoxin CnIIIA from Conus consors (Singed cone).